Here is a 379-residue protein sequence, read N- to C-terminus: Cytochrome b (379 aa).

4 helical membrane passes run 33–53, 77–98, 113–133, and 178–198; these read FGSL…FLAM, WLIR…YLHI, WNIG…GYVL, and FFAF…LHLL. Positions 83 and 97 each coordinate heme b. H182 and H196 together coordinate heme b. H201 lines the a ubiquinone pocket. 4 consecutive transmembrane segments (helical) span residues 226-246, 288-308, 320-340, and 347-367; these read YKDL…ALFY, LGGV…PILH, ASQL…WIGG, and YIII…VLNP.

Belongs to the cytochrome b family. As to quaternary structure, the cytochrome bc1 complex contains 3 respiratory subunits (MT-CYB, CYC1 and UQCRFS1), 2 core proteins (UQCRC1 and UQCRC2) and probably 6 low-molecular weight proteins. The cofactor is heme b.

The protein resides in the mitochondrion inner membrane. Its function is as follows. Component of the ubiquinol-cytochrome c reductase complex (complex III or cytochrome b-c1 complex) that is part of the mitochondrial respiratory chain. The b-c1 complex mediates electron transfer from ubiquinol to cytochrome c. Contributes to the generation of a proton gradient across the mitochondrial membrane that is then used for ATP synthesis. This Anguilla anguilla (European freshwater eel) protein is Cytochrome b (mt-cyb).